Here is a 390-residue protein sequence, read N- to C-terminus: Succinate--CoA ligase [ADP-forming] subunit beta (390 aa).

One can recognise an ATP-grasp domain in the interval 9–244 (KEIFRKYGVP…LDEEEPTEVE (236 aa)). Residues Lys46, 53 to 55 (GRG), Glu99, Ala102, and Glu107 each bind ATP. Positions 199 and 213 each coordinate Mg(2+). Substrate contacts are provided by residues Asn264 and 321–323 (GIV).

It belongs to the succinate/malate CoA ligase beta subunit family. As to quaternary structure, heterotetramer of two alpha and two beta subunits. Requires Mg(2+) as cofactor.

The enzyme catalyses succinate + ATP + CoA = succinyl-CoA + ADP + phosphate. The catalysed reaction is GTP + succinate + CoA = succinyl-CoA + GDP + phosphate. Its pathway is carbohydrate metabolism; tricarboxylic acid cycle; succinate from succinyl-CoA (ligase route): step 1/1. Succinyl-CoA synthetase functions in the citric acid cycle (TCA), coupling the hydrolysis of succinyl-CoA to the synthesis of either ATP or GTP and thus represents the only step of substrate-level phosphorylation in the TCA. The beta subunit provides nucleotide specificity of the enzyme and binds the substrate succinate, while the binding sites for coenzyme A and phosphate are found in the alpha subunit. The protein is Succinate--CoA ligase [ADP-forming] subunit beta of Nautilia profundicola (strain ATCC BAA-1463 / DSM 18972 / AmH).